Reading from the N-terminus, the 475-residue chain is Chromosomal replication initiator protein DnaA (475 aa).

The domain I, interacts with DnaA modulators stretch occupies residues 1–73 (MSDIEQERWS…LACWQAELPD (73 aa)). The segment at 73–131 (DVHRIDLMVRSAMRCAAPAKEAPAADPRRPEHGDGRASTELKMVATAPASANHDALGGS) is domain II. The interval 132-354 (PLDPRLTFAS…GAINRLLAHS (223 aa)) is domain III, AAA+ region. 4 residues coordinate ATP: glycine 179, glycine 181, lysine 182, and threonine 183. A domain IV, binds dsDNA region spans residues 355–475 (KLNAQPVTLE…VELLKRQLQE (121 aa)).

It belongs to the DnaA family. As to quaternary structure, oligomerizes as a right-handed, spiral filament on DNA at oriC.

It localises to the cytoplasm. Functionally, plays an essential role in the initiation and regulation of chromosomal replication. ATP-DnaA binds to the origin of replication (oriC) to initiate formation of the DNA replication initiation complex once per cell cycle. Binds the DnaA box (a 9 base pair repeat at the origin) and separates the double-stranded (ds)DNA. Forms a right-handed helical filament on oriC DNA; dsDNA binds to the exterior of the filament while single-stranded (ss)DNA is stabiized in the filament's interior. The ATP-DnaA-oriC complex binds and stabilizes one strand of the AT-rich DNA unwinding element (DUE), permitting loading of DNA polymerase. After initiation quickly degrades to an ADP-DnaA complex that is not apt for DNA replication. Binds acidic phospholipids. The protein is Chromosomal replication initiator protein DnaA of Nitrobacter hamburgensis (strain DSM 10229 / NCIMB 13809 / X14).